Here is a 157-residue protein sequence, read N- to C-terminus: UPF0178 protein BH1374 (157 aa).

Belongs to the UPF0178 family.

This is UPF0178 protein BH1374 from Halalkalibacterium halodurans (strain ATCC BAA-125 / DSM 18197 / FERM 7344 / JCM 9153 / C-125) (Bacillus halodurans).